Reading from the N-terminus, the 85-residue chain is F1845 adhesin operon regulatory protein (85 aa).

Regulates the transcription of genes involved in the biosynthesis of F1845 fimbrial adhesin. The sequence is that of F1845 adhesin operon regulatory protein (daaA) from Escherichia coli.